Consider the following 114-residue polypeptide: Large ribosomal subunit protein bL20c (114 aa).

The protein belongs to the bacterial ribosomal protein bL20 family.

It localises to the plastid. It is found in the chloroplast. Its function is as follows. Binds directly to 23S ribosomal RNA and is necessary for the in vitro assembly process of the 50S ribosomal subunit. It is not involved in the protein synthesizing functions of that subunit. In Psilotum nudum (Whisk fern), this protein is Large ribosomal subunit protein bL20c.